Consider the following 348-residue polypeptide: Dihydroorotase (348 aa).

His-17 and His-19 together coordinate Zn(2+). Substrate-binding positions include 19–21 (HLR) and Asn-45. Positions 103, 140, and 178 each coordinate Zn(2+). Lys-103 is subject to N6-carboxylysine. His-140 serves as a coordination point for substrate. Leu-223 is a binding site for substrate. Asp-251 contacts Zn(2+). Asp-251 is a catalytic residue. Positions 255 and 267 each coordinate substrate.

It belongs to the metallo-dependent hydrolases superfamily. DHOase family. Class II DHOase subfamily. As to quaternary structure, homodimer. It depends on Zn(2+) as a cofactor.

It carries out the reaction (S)-dihydroorotate + H2O = N-carbamoyl-L-aspartate + H(+). Its pathway is pyrimidine metabolism; UMP biosynthesis via de novo pathway; (S)-dihydroorotate from bicarbonate: step 3/3. Catalyzes the reversible cyclization of carbamoyl aspartate to dihydroorotate. In Shigella boydii serotype 18 (strain CDC 3083-94 / BS512), this protein is Dihydroorotase.